The primary structure comprises 363 residues: 3-dehydroquinate synthase (363 aa).

Residues 72–77, 130–131, Lys142, and Lys151 each bind NAD(+); these read SGEKEK and TT. 3 residues coordinate Zn(2+): Glu184, His247, and His264.

The protein belongs to the sugar phosphate cyclases superfamily. Dehydroquinate synthase family. It depends on Co(2+) as a cofactor. The cofactor is Zn(2+). NAD(+) serves as cofactor.

Its subcellular location is the cytoplasm. The catalysed reaction is 7-phospho-2-dehydro-3-deoxy-D-arabino-heptonate = 3-dehydroquinate + phosphate. The protein operates within metabolic intermediate biosynthesis; chorismate biosynthesis; chorismate from D-erythrose 4-phosphate and phosphoenolpyruvate: step 2/7. Functionally, catalyzes the conversion of 3-deoxy-D-arabino-heptulosonate 7-phosphate (DAHP) to dehydroquinate (DHQ). The chain is 3-dehydroquinate synthase from Bacillus thuringiensis (strain Al Hakam).